The sequence spans 524 residues: Probable beta-1,4-xylosyltransferase IRX14 (524 aa).

Residues 1 to 51 (MMKSLLPQSQLRRSAAAASAARSSGGGAGSGGADGAGSDGGAGGRAPATST) lie on the Cytoplasmic side of the membrane. Positions 21–41 (ARSSGGGAGSGGADGAGSDGG) are disordered. Residues 24–41 (SGGGAGSGGADGAGSDGG) show a composition bias toward gly residues. Residues 52–71 (FWFLLHALCCLVSLFLGFRF) form a helical; Signal-anchor for type II membrane protein membrane-spanning segment. Residues 72–524 (SRLLFFLLFS…SRSTTKRKEN (453 aa)) are Lumenal-facing. Residues Asn-132, Asn-135, Asn-240, and Asn-353 are each glycosylated (N-linked (GlcNAc...) asparagine). A disordered region spans residues 492–524 (AELVDSKQDQEGRRLSRTDRSSRSRSTTKRKEN). The segment covering 495–513 (VDSKQDQEGRRLSRTDRSS) has biased composition (basic and acidic residues).

This sequence belongs to the glycosyltransferase 43 family.

It localises to the golgi apparatus membrane. Probable beta-1,4-xylosyltransferase involved in xylan biosynthesis in cell walls. The chain is Probable beta-1,4-xylosyltransferase IRX14 from Oryza sativa subsp. japonica (Rice).